A 200-amino-acid chain; its full sequence is High mobility group protein B3 (200 aa).

At lysine 3 the chain carries N6-acetyllysine. 2 DNA-binding regions (HMG box) span residues 9-79 (PKGK…KDYG) and 93-161 (PKRP…ADYK). Cysteine sulfonic acid (-SO3H); alternate is present on cysteine 23. A disulfide bridge links cysteine 23 with cysteine 45. Residues lysine 30 and lysine 43 each carry the N6-acetyllysine modification. Cysteine 45 carries the cysteine sulfonic acid (-SO3H); alternate modification. Positions 71–97 (YDREMKDYGPAKGGKKKKDPNAPKRPP) are disordered. At serine 98 the chain carries Phosphoserine. Cysteine 104 is subject to Cysteine sulfonic acid (-SO3H). N6-acetyllysine occurs at positions 112 and 139. The segment at 161-200 (KSKGKFDGAKGPAKVARKKVEEEEEEEEEEEEEEEEEEDE) is disordered. A compositionally biased stretch (acidic residues) spans 182–200 (EEEEEEEEEEEEEEEEEDE).

The protein belongs to the HMGB family. Post-translationally, reduction/oxidation of cysteine residues Cys-23, Cys-45 and Cys-104 and a possible intramolecular disulfide bond involving Cys-23 and Cys-45 give rise to different redox forms with specific functional activities in various cellular compartments: 1- fully reduced HMGB3 (HMGB3C23hC45hC104h), 2- disulfide HMGB3 (HMGB3C23-C45C104h) and 3- sulfonyl HMGB3 (HMGB3C23soC45soC104so). In terms of tissue distribution, expressed in bone marrow cells, specifically in primitive Lin-, c-kit+, Sca-1+, IL-7Ralpha- cells, and Ter119+ erythroid cells.

It is found in the nucleus. The protein localises to the chromosome. It localises to the cytoplasm. In terms of biological role, multifunctional protein with various roles in different cellular compartments. May act in a redox sensitive manner. Associates with chromatin and binds DNA with a preference for non-canonical DNA structures such as single-stranded DNA. Can bend DNA and enhance DNA flexibility by looping thus providing a mechanism to promote activities on various gene promoters. Proposed to be involved in the innate immune response to nucleic acids by acting as a cytoplasmic promiscuous immunogenic DNA/RNA sensor. Negatively regulates B-cell and myeloid cell differentiation. In hematopoietic stem cells may regulate the balance between self-renewal and differentiation. Involved in negative regulation of canonical Wnt signaling. The polypeptide is High mobility group protein B3 (Hmgb3) (Mus musculus (Mouse)).